The sequence spans 40 residues: Photosystem II reaction center protein J (40 aa).

Residues 10 to 30 form a helical membrane-spanning segment; that stretch reads LWLVGTVAGTLVIGLLGVFFY.

This sequence belongs to the PsbJ family. In terms of assembly, PSII is composed of 1 copy each of membrane proteins PsbA, PsbB, PsbC, PsbD, PsbE, PsbF, PsbH, PsbI, PsbJ, PsbK, PsbL, PsbM, PsbT, PsbX, PsbY, PsbZ, Psb30/Ycf12, at least 3 peripheral proteins of the oxygen-evolving complex and a large number of cofactors. It forms dimeric complexes.

Its subcellular location is the plastid. The protein resides in the chloroplast thylakoid membrane. One of the components of the core complex of photosystem II (PSII). PSII is a light-driven water:plastoquinone oxidoreductase that uses light energy to abstract electrons from H(2)O, generating O(2) and a proton gradient subsequently used for ATP formation. It consists of a core antenna complex that captures photons, and an electron transfer chain that converts photonic excitation into a charge separation. This is Photosystem II reaction center protein J from Adiantum capillus-veneris (Maidenhair fern).